Consider the following 666-residue polypeptide: Enzymatic polyprotein (666 aa).

Asp54 is an active-site residue. A Reverse transcriptase domain is found at 215–445 (ENPIDPIKSK…EKINFLGLEI (231 aa)).

This sequence belongs to the caulimoviridae enzymatic polyprotein family.

The enzyme catalyses DNA(n) + a 2'-deoxyribonucleoside 5'-triphosphate = DNA(n+1) + diphosphate. Encodes for at least two polypeptides: protease (PR) and reverse transcriptase (RT). The protease processes the polyprotein in cis. Reverse transcriptase is multifunctional enzyme that converts the viral RNA genome into dsDNA in viral cytoplasmic capsids. This enzyme displays a DNA polymerase activity that can copy either DNA or RNA templates, and a ribonuclease H (RNase H) activity that cleaves the RNA strand of RNA-DNA heteroduplexes in a partially processive 3'- to 5'-endonucleasic mode. Neo-synthesized pregenomic RNA (pgRNA) are encapsidated, and reverse-transcribed inside the nucleocapsid. Partial (+)DNA is synthesized from the (-)DNA template and generates the relaxed circular DNA (RC-DNA) genome. After budding and infection, the RC-DNA migrates in the nucleus, and is converted into a plasmid-like covalently closed circular DNA (cccDNA). The protein is Enzymatic polyprotein of Figwort mosaic virus (strain DxS) (FMV).